Here is a 486-residue protein sequence, read N- to C-terminus: Vanillin dehydrogenase (486 aa).

Residues Gly-210–Pro-211, Gly-230–Ser-231, and Glu-252–Gly-254 each bind NAD(+). Glu-252 (proton acceptor) is an active-site residue. Cys-286 serves as the catalytic Nucleophile. Glu-380–Phe-382 lines the NAD(+) pocket.

The protein belongs to the aldehyde dehydrogenase family.

The catalysed reaction is vanillin + NAD(+) + H2O = vanillate + NADH + 2 H(+). Catalyzes NAD(+)-dependent oxidation of vanillin to vanillate. Also oxidizes other aromatic aldehydes including benzaldehyde, coniferyl aldehyde and cinnamaldehyde, but has a preference for vanillin. Not active with NADP(+). Involved in the degradation pathway of lignin-derived aromatic compounds of plant cell walls. Catalyzes the conversion of vanillin to vanillate due to toxicity of vanillin to the cells. This chain is Vanillin dehydrogenase, found in Amycolatopsis sp. (strain ATCC 39116 / 75iv2).